Here is a 335-residue protein sequence, read N- to C-terminus: Legumin type B (335 aa).

Disordered stretches follow at residues 47–87 and 102–155; these read PETQ…GNSV and TEED…GRNG. A compositionally biased stretch (basic and acidic residues) spans 105 to 118; the sequence is DTAKRLRSPRDKRN. A compositionally biased stretch (acidic residues) spans 135-144; the sequence is QQEEEEEEEE. In terms of domain architecture, Cupin type-1 spans 167–314; that stretch reads ENIAQPARAD…AFGLRQRQVT (148 aa).

It belongs to the 11S seed storage protein (globulins) family. As to quaternary structure, hexamer; each subunit is composed of an acidic and a basic chain derived from a single precursor and linked by a disulfide bond.

This protein found in the seeds of many leguminous and non-leguminous plants is the source of sulfur-containing amino acids in seed meals. This Vicia faba (Broad bean) protein is Legumin type B (LEB2).